Reading from the N-terminus, the 256-residue chain is Cell division protein ZapD (256 aa).

Belongs to the ZapD family. Interacts with FtsZ.

It localises to the cytoplasm. In terms of biological role, cell division factor that enhances FtsZ-ring assembly. Directly interacts with FtsZ and promotes bundling of FtsZ protofilaments, with a reduction in FtsZ GTPase activity. In Aromatoleum aromaticum (strain DSM 19018 / LMG 30748 / EbN1) (Azoarcus sp. (strain EbN1)), this protein is Cell division protein ZapD.